The following is a 504-amino-acid chain: ATP synthase subunit alpha (504 aa).

171–178 (GDRQTGKT) contributes to the ATP binding site.

It belongs to the ATPase alpha/beta chains family. As to quaternary structure, F-type ATPases have 2 components, CF(1) - the catalytic core - and CF(0) - the membrane proton channel. CF(1) has five subunits: alpha(3), beta(3), gamma(1), delta(1), epsilon(1). CF(0) has three main subunits: a(1), b(2) and c(9-12). The alpha and beta chains form an alternating ring which encloses part of the gamma chain. CF(1) is attached to CF(0) by a central stalk formed by the gamma and epsilon chains, while a peripheral stalk is formed by the delta and b chains.

The protein resides in the cell inner membrane. It catalyses the reaction ATP + H2O + 4 H(+)(in) = ADP + phosphate + 5 H(+)(out). Functionally, produces ATP from ADP in the presence of a proton gradient across the membrane. The alpha chain is a regulatory subunit. This Sulfurovum sp. (strain NBC37-1) protein is ATP synthase subunit alpha.